The following is a 329-amino-acid chain: Mas-related G-protein coupled receptor member X2 (329 aa).

Residues Met1–Ser33 are Extracellular-facing. Residues Val34–Leu54 traverse the membrane as a helical segment. Topologically, residues Leu55–Ala63 are cytoplasmic. The helical transmembrane segment at Phe64–Thr84 threads the bilayer. The Extracellular segment spans residues Ser85–Ser96. A helical transmembrane segment spans residues Ile97–Leu116. At Ser117–His143 the chain is on the cytoplasmic side. The chain crosses the membrane as a helical span at residues Leu144–Gly164. Over Lys165–Asp183 the chain is Extracellular. Residues Phe184 to Leu204 traverse the membrane as a helical segment. Over Leu205–Thr227 the chain is Cytoplasmic. The chain crosses the membrane as a helical span at residues Val228–Ile248. At Trp249–Ser263 the chain is on the extracellular side. A helical membrane pass occupies residues Val264 to Phe284. Residues Arg285 to Val329 lie on the Cytoplasmic side of the membrane.

Belongs to the G-protein coupled receptor 1 family. Mas subfamily.

It is found in the cell membrane. In terms of biological role, mast cell-specific receptor for basic secretagogues, i.e. cationic amphiphilic drugs, as well as endo- or exogenous peptides, consisting of a basic head group and a hydrophobic core. Recognizes and binds small molecules containing a cyclized tetrahydroisoquinoline (THIQ), such as non-steroidal neuromuscular blocking drugs (NMBDs), including tubocurarine and atracurium. In response to these compounds, mediates pseudo-allergic reactions characterized by histamine release, inflammation and airway contraction. This is Mas-related G-protein coupled receptor member X2 (MRGPRX2) from Macaca mulatta (Rhesus macaque).